We begin with the raw amino-acid sequence, 94 residues long: MNVYSVIKKPHVTEKASLGSDATNTVTIVVDRDANKIEIKQAVETLFKVKVDSVRTVNVAGKVKRFGRNFGKHSNWKKAFVTLSEGQSLDFFEV.

The protein belongs to the universal ribosomal protein uL23 family. As to quaternary structure, part of the 50S ribosomal subunit. Contacts protein L29, and trigger factor when it is bound to the ribosome.

In terms of biological role, one of the early assembly proteins it binds 23S rRNA. One of the proteins that surrounds the polypeptide exit tunnel on the outside of the ribosome. Forms the main docking site for trigger factor binding to the ribosome. The protein is Large ribosomal subunit protein uL23 of Pelobacter propionicus (strain DSM 2379 / NBRC 103807 / OttBd1).